A 531-amino-acid chain; its full sequence is Polygalacturonase (531 aa).

A signal peptide spans 1–23; the sequence is MILSHRYTLIALAAAILSSGAHA. The active-site Proton donor is D307. Residue H333 is part of the active site. Residues 518–531 are required for PGA export across the outer membrane and catalytic activity; that stretch reads AFVPLKSVAPTSPI.

The protein belongs to the glycosyl hydrolase 28 family. In terms of assembly, monomer.

The protein resides in the secreted. It carries out the reaction (1,4-alpha-D-galacturonosyl)n+m + H2O = (1,4-alpha-D-galacturonosyl)n + (1,4-alpha-D-galacturonosyl)m.. Contributes to the wilt disease production on tomato. In Ralstonia nicotianae (strain ATCC BAA-1114 / GMI1000) (Ralstonia solanacearum), this protein is Polygalacturonase (pglA).